Consider the following 90-residue polypeptide: Putative Fis-like DNA-binding protein (90 aa).

Residues Q66–K85 constitute a DNA-binding region (H-T-H motif).

The protein belongs to the transcriptional regulatory Fis family.

The protein is Putative Fis-like DNA-binding protein of Xylella fastidiosa (strain 9a5c).